The sequence spans 81 residues: Photosystem I iron-sulfur center (81 aa).

4Fe-4S ferredoxin-type domains are found at residues 2 to 31 (SHAVKIYDTCIGCTQCVRACPLDVLEMVPW) and 39 to 68 (IASSPRTEDCVGCKRCETACPTDFLSIRVY). Residues Cys-11, Cys-14, Cys-17, Cys-21, Cys-48, Cys-51, Cys-54, and Cys-58 each contribute to the [4Fe-4S] cluster site.

In terms of assembly, the cyanobacterial PSI reaction center is composed of one copy each of PsaA,B,C,D,E,F,I,J,K,L,M and X, and forms trimeric complexes. [4Fe-4S] cluster serves as cofactor.

Its subcellular location is the cellular thylakoid membrane. It catalyses the reaction reduced [plastocyanin] + hnu + oxidized [2Fe-2S]-[ferredoxin] = oxidized [plastocyanin] + reduced [2Fe-2S]-[ferredoxin]. Functionally, apoprotein for the two 4Fe-4S centers FA and FB of photosystem I (PSI); essential for photochemical activity. FB is the terminal electron acceptor of PSI, donating electrons to ferredoxin. The C-terminus interacts with PsaA/B/D and helps assemble the protein into the PSI complex. Required for binding of PsaD and PsaE to PSI. PSI is a plastocyanin/cytochrome c6-ferredoxin oxidoreductase, converting photonic excitation into a charge separation, which transfers an electron from the donor P700 chlorophyll pair to the spectroscopically characterized acceptors A0, A1, FX, FA and FB in turn. This chain is Photosystem I iron-sulfur center, found in Prochlorococcus marinus (strain MIT 9312).